The chain runs to 383 residues: Dihydroorotase (383 aa).

The Zn(2+) site is built by His47 and His49. Residues 49 to 51 (HFR) and Asn81 contribute to the substrate site. The Zn(2+) site is built by Lys128, His159, His198, and Asp264. Residue Lys128 is modified to N6-carboxylysine. The active site involves Asp264. Residues His268 and 280-281 (PG) contribute to the substrate site.

Belongs to the metallo-dependent hydrolases superfamily. DHOase family. Class I DHOase subfamily. Requires Zn(2+) as cofactor.

It catalyses the reaction (S)-dihydroorotate + H2O = N-carbamoyl-L-aspartate + H(+). The protein operates within pyrimidine metabolism; UMP biosynthesis via de novo pathway; (S)-dihydroorotate from bicarbonate: step 3/3. Its function is as follows. Catalyzes the reversible cyclization of carbamoyl aspartate to dihydroorotate. The protein is Dihydroorotase of Pyrobaculum aerophilum (strain ATCC 51768 / DSM 7523 / JCM 9630 / CIP 104966 / NBRC 100827 / IM2).